The chain runs to 467 residues: Peroxisome proliferator-activated receptor alpha (467 aa).

The nuclear receptor DNA-binding region spans 99–173; that stretch reads NIECRICGDK…VGMSHNAIRF (75 aa). 2 NR C4-type zinc fingers span residues 102 to 122 and 139 to 161; these read CRIC…CEGC and CDRS…FHKC. Residues 239-466 form the NR LBD domain; it reads FVIHDMETLC…PLLQEIYRDM (228 aa). Positions 304-433 are required for heterodimerization with RXRA; it reads DQVTLLKYGV…PKLLQKLADL (130 aa).

Belongs to the nuclear hormone receptor family. NR1 subfamily. Heterodimer; with RXRA. This heterodimerization is required for DNA binding and transactivation activity. Interacts with NCOA3 coactivator. Interacts with CITED2; the interaction stimulates its transcriptional activity. Also interacts with PPARBP in vitro. Interacts with AKAP13, LPIN1, PRDM16 and coactivator NCOA6. Interacts with ASXL1 and ASXL2. Interacts with PER2. Interacts with SIRT1; the interaction seems to be modulated by NAD(+) levels. Interacts with CRY1 and CRY2. In hepatocytes, interacts with PAQR3 and HUWE1; the interactions promote PPARA poylubiquitination and HUWE1-mediated degradation. Ubiquitinated by E3 ubiquitin-protein ligase HUWE1; leading to proteasomal degradation. Post-translationally, phosphorylated.

The protein resides in the nucleus. Its function is as follows. Ligand-activated transcription factor. Key regulator of lipid metabolism. Activated by the endogenous ligand 1-palmitoyl-2-oleoyl-sn-glycerol-3-phosphocholine (16:0/18:1-GPC). Activated by oleylethanolamide, a naturally occurring lipid that regulates satiety. Receptor for peroxisome proliferators such as hypolipidemic drugs and fatty acids. Regulates the peroxisomal beta-oxidation pathway of fatty acids. Functions as a transcription activator for the ACOX1 and P450 genes. Transactivation activity requires heterodimerization with RXRA and is antagonized by NR2C2. May be required for the propagation of clock information to metabolic pathways regulated by PER2. This is Peroxisome proliferator-activated receptor alpha (PPARA) from Cavia porcellus (Guinea pig).